The following is a 321-amino-acid chain: MRTYYIFSSGRLRRMDNTLALELETERRVVPVEDIDHIYCFSELDLNTRLLDFLAQKQICLHFFNYYGHYSGSFIPRESQLSGFLLVRQVEHYLDQAKRLELARTFVEGALHNIRRNLEKREYDDICSKLDEIREGIGKTASIEELMSLEAHARKAYYDTWEEITGWEFGSRSKRPPANALNALISFGNAMMYTVVLKEIYRTALNPTISYLHEPSERRYSLALDVAEIFKPVFVDRLIFRLINLNMLKETHFDTNVNFVYLTEGGRKVFVKEFEETLEKTILHRKLKRNIRYKSLVRLDLYKLIKHLLGEEKYSPMKVWW.

Mn(2+) contacts are provided by Glu150, His213, and Glu228.

The protein belongs to the CRISPR-associated endonuclease Cas1 family. In terms of assembly, homodimer, forms a heterotetramer with a Cas2 homodimer. Mg(2+) serves as cofactor. It depends on Mn(2+) as a cofactor.

Functionally, CRISPR (clustered regularly interspaced short palindromic repeat), is an adaptive immune system that provides protection against mobile genetic elements (viruses, transposable elements and conjugative plasmids). CRISPR clusters contain spacers, sequences complementary to antecedent mobile elements, and target invading nucleic acids. CRISPR clusters are transcribed and processed into CRISPR RNA (crRNA). Acts as a dsDNA endonuclease. Involved in the integration of spacer DNA into the CRISPR cassette. This Moorella thermoacetica (strain ATCC 39073 / JCM 9320) protein is CRISPR-associated endonuclease Cas1 2.